The primary structure comprises 274 residues: uncharacterized protein (274 aa).

Residues 238–258 traverse the membrane as a helical segment; sequence ILSVQVIFATVIALIAISVFC.

It is found in the membrane. This is an uncharacterized protein from Schizosaccharomyces pombe (strain 972 / ATCC 24843) (Fission yeast).